A 270-amino-acid polypeptide reads, in one-letter code: Hydroxyethylthiazole kinase (270 aa).

Residue Met-44 coordinates substrate. Residues Arg-119 and Thr-165 each coordinate ATP. Gly-192 serves as a coordination point for substrate.

It belongs to the Thz kinase family. Mg(2+) is required as a cofactor.

It catalyses the reaction 5-(2-hydroxyethyl)-4-methylthiazole + ATP = 4-methyl-5-(2-phosphooxyethyl)-thiazole + ADP + H(+). It functions in the pathway cofactor biosynthesis; thiamine diphosphate biosynthesis; 4-methyl-5-(2-phosphoethyl)-thiazole from 5-(2-hydroxyethyl)-4-methylthiazole: step 1/1. Functionally, catalyzes the phosphorylation of the hydroxyl group of 4-methyl-5-beta-hydroxyethylthiazole (THZ). The protein is Hydroxyethylthiazole kinase of Corynebacterium efficiens (strain DSM 44549 / YS-314 / AJ 12310 / JCM 11189 / NBRC 100395).